We begin with the raw amino-acid sequence, 1004 residues long: Protein phosphatase 1 regulatory subunit 12A (1004 aa).

The segment at 35–38 (KVKF) is important for interaction with PPP1CB. 6 ANK repeats span residues 39 to 68 (DDGA…DINY), 72 to 101 (DGLT…NINQ), 105 to 134 (EGWI…HVGA), 138 to 164 (EGDT…RQGV), 198 to 227 (SGGT…DVNI), and 231 to 260 (DGWT…DMEA). Basic and acidic residues predominate over residues 291–300 (HSEKREKKSP). The tract at residues 291–920 (HSEKREKKSP…SYLEDRKPYC (630 aa)) is disordered. Residues 302–316 (IESTANLDNNQTQKT) are compositionally biased toward polar residues. Composition is skewed to basic and acidic residues over residues 318–329 (KNKETLIMEQEK) and 336–353 (SLEH…KDES). Positions 357–369 (SEEEEDDDSESEA) are enriched in acidic residues. Positions 378 to 392 (ANANTTSTQSASMTA) are enriched in polar residues. Residues 417 to 427 (SPKEEERKDES) show a composition bias toward basic and acidic residues. The span at 464-475 (RSASSPRLSSSL) shows a compositional bias: low complexity. Residues 476–486 (DNKEKEKDGKG) show a composition bias toward basic and acidic residues. Residues 514-525 (SSASSIRSGSSY) are compositionally biased toward low complexity. Residues 528 to 538 (RKWEEDVKKNS) show a composition bias toward basic and acidic residues. Polar residues predominate over residues 539–554 (LNEGPTSLNTSYQRSG). Low complexity-rich tracts occupy residues 564–578 (VSSN…VTSS) and 587–602 (ASAN…STSA). The segment covering 613 to 624 (WAEDSTEKEKDS) has biased composition (basic and acidic residues). Positions 625–659 (VPTAVTVPVAPSVVNAAATTTAMTTATSGTVSSTS) are enriched in low complexity. Residues 672–681 (VRDEESESQR) show a composition bias toward basic and acidic residues. Residues 682-692 (KARSRQARQSR) are compositionally biased toward basic residues. Phosphothreonine; by ROCK2 is present on threonine 695. Basic and acidic residues predominate over residues 717–765 (RTREQENEEKEKEEKEKQDKEKQEEKKESETKDDDYRQRYSRTVEEPYH). Positions 770 to 793 (TSTSTSTSSTSSLSTSTSSLSSSS) are enriched in low complexity. The segment covering 794-808 (QLNRPNSLIGITSAY) has biased composition (polar residues). Positions 812–837 (GTKESEREGGKKEEEKEEDKSQPKSI) are enriched in basic and acidic residues. Basic residues predominate over residues 838–849 (RERRRPREKRRS). Phosphothreonine; by ROCK2 is present on threonine 850. Positions 864–880 (QEHQSDSEEGTNKKETQ) are enriched in basic and acidic residues. Residues 881-896 (SDSLSRYDTGSLSVSS) are compositionally biased toward polar residues.

As to quaternary structure, PP1 comprises a catalytic subunit, PPP1CA, PPP1CB or PPP1CC, and one or several targeting or regulatory subunits. PPP1R12A mediates binding to myosin. In terms of processing, phosphorylated by CIT (Rho-associated kinase) and by ROCK2 on serine and threonine residues. Phosphorylation at Thr-695 leads to inhibition of myosin phosphatase activity. Phosphorylation at Thr-850 abolishes myosin binding. May be phosphorylated at Thr-695 by DMPK; may inhibit the myosin phosphatase activity. Detected in brain, lung, aorta, heart, gizzard, stomach, oviduct, spleen, kidney and small intestine.

The protein localises to the cytoplasm. Its subcellular location is the cytoskeleton. It is found in the stress fiber. Its function is as follows. Regulates myosin phosphatase activity. The protein is Protein phosphatase 1 regulatory subunit 12A (PPP1R12A) of Gallus gallus (Chicken).